A 220-amino-acid chain; its full sequence is tRNA (guanine-N(7)-)-methyltransferase (220 aa).

4 residues coordinate S-adenosyl-L-methionine: Glu44, Glu69, Asp96, and Asp118. Residue Asp118 is part of the active site. Lys122 is a binding site for substrate. An interaction with RNA region spans residues 124–129 (RHEKRR). Substrate is bound by residues Asp154 and 191–194 (TEYE).

Belongs to the class I-like SAM-binding methyltransferase superfamily. TrmB family.

The enzyme catalyses guanosine(46) in tRNA + S-adenosyl-L-methionine = N(7)-methylguanosine(46) in tRNA + S-adenosyl-L-homocysteine. It functions in the pathway tRNA modification; N(7)-methylguanine-tRNA biosynthesis. Its function is as follows. Catalyzes the formation of N(7)-methylguanine at position 46 (m7G46) in tRNA. The polypeptide is tRNA (guanine-N(7)-)-methyltransferase (Halalkalibacterium halodurans (strain ATCC BAA-125 / DSM 18197 / FERM 7344 / JCM 9153 / C-125) (Bacillus halodurans)).